The primary structure comprises 496 residues: E3 ubiquitin-protein ligase CBL-C (496 aa).

A 4H region spans residues 7–144 (PRGWQRGEPR…SALFPAGKYC (138 aa)). Positions 7–320 (PRGWQRGEPR…GKKHNPDLTE (314 aa)) constitute a Cbl-PTB domain. An EF-hand-like region spans residues 145 to 217 (GHLYQLTKGS…FEFDVFTRLF (73 aa)). Ca(2+)-binding residues include D198, T200, N202, and E209. An SH2-like region spans residues 218–320 (QPWPTLLRNW…GKKHNPDLTE (103 aa)). R263 is a binding site for 4-O-phospho-L-tyrosine. The segment at 321–349 (LCRVEPYQRIQVSEEQLLLYQAMNSTFQL) is linker. Y340 carries the post-translational modification Phosphotyrosine; by SRC. The RING-type zinc-finger motif lies at 350–389 (CKICAERDKDVRIEPCGHLLCSCCLAAWQDSDSQTCPFCR). Positions 350–494 (CKICAERDKD…RPRAREEATE (145 aa)) are interaction with RET. A disordered region spans residues 432 to 453 (PVIPSAPSLLPEDQFPQGPQDK).

Interacts with Ubiquitin-conjugating enzyme E2 UBE2D2 and UBE2D3. Isoform 1 interacts with EGFR (tyrosine phosphorylated). Interacts with the SH3 domain proteins LYN and CRK. Interacts (via RING-type zinc finger) with TGFB1I1 (via LIM zinc-binding domain 2); the interaction is direct and enhances the E3 activity. Interacts directly with RET (inactive) and CD2AP; dissociates from RET upon RET activation by GDNF which also increases the interaction with CD2AP suggesting dissociation as CBLC:CD2AP complex. Interacts with SRC; the interaction is enhanced when SRC is phosphorylated at 'Tyr-419'. Phosphorylated on tyrosines by EGFR. Post-translationally, phosphorylated on multiple tyrosine residues by SRC. Isoform 1, but not isoform 2, is phosphorylated on tyrosines by EGFR. In terms of processing, autoubiquitinated, when phosphorylated at Tyr-340. In terms of tissue distribution, widely expressed in tissues, where the expression is restricted to epithelial cells (at protein level).

It carries out the reaction S-ubiquitinyl-[E2 ubiquitin-conjugating enzyme]-L-cysteine + [acceptor protein]-L-lysine = [E2 ubiquitin-conjugating enzyme]-L-cysteine + N(6)-ubiquitinyl-[acceptor protein]-L-lysine.. With respect to regulation, phosphorylation at Tyr-340 is necessary and sufficient for the activation of E3 activity. Its function is as follows. Acts as an E3 ubiquitin-protein ligase, which accepts ubiquitin from specific E2 ubiquitin-conjugating enzymes, and then transfers it to substrates promoting their degradation by the proteasome. Functionally coupled with the E2 ubiquitin-protein ligases UB2D1, UB2D2 and UB2D3. Regulator of EGFR mediated signal transduction; upon EGF activation, ubiquitinates EGFR. Isoform 1, but not isoform 2, inhibits EGF stimulated MAPK1 activation. Promotes ubiquitination of SRC phosphorylated at 'Tyr-424', has the highest ubiquitin ligase activity among CBL family proteins. In collaboration with CD2AP may act as regulatory checkpoint for Ret signaling by modulating the rate of RET degradation after ligand activation; CD2AP converts it from an inhibitor to a promoter of RET degradation; the function limits the potency of GDNF on neuronal survival. This is E3 ubiquitin-protein ligase CBL-C (Cblc) from Mus musculus (Mouse).